Here is a 246-residue protein sequence, read N- to C-terminus: Pyridoxine 5'-phosphate synthase (246 aa).

Asn12 contributes to the 3-amino-2-oxopropyl phosphate binding site. 14 to 15 (DH) is a 1-deoxy-D-xylulose 5-phosphate binding site. Arg23 is a binding site for 3-amino-2-oxopropyl phosphate. His48 serves as the catalytic Proton acceptor. Arg50 and His55 together coordinate 1-deoxy-D-xylulose 5-phosphate. Residue Glu75 is the Proton acceptor of the active site. Thr105 is a binding site for 1-deoxy-D-xylulose 5-phosphate. Residue His196 is the Proton donor of the active site. 3-amino-2-oxopropyl phosphate is bound by residues Gly197 and 218 to 219 (GH).

Belongs to the PNP synthase family. In terms of assembly, homooctamer; tetramer of dimers.

It localises to the cytoplasm. It carries out the reaction 3-amino-2-oxopropyl phosphate + 1-deoxy-D-xylulose 5-phosphate = pyridoxine 5'-phosphate + phosphate + 2 H2O + H(+). It participates in cofactor biosynthesis; pyridoxine 5'-phosphate biosynthesis; pyridoxine 5'-phosphate from D-erythrose 4-phosphate: step 5/5. In terms of biological role, catalyzes the complicated ring closure reaction between the two acyclic compounds 1-deoxy-D-xylulose-5-phosphate (DXP) and 3-amino-2-oxopropyl phosphate (1-amino-acetone-3-phosphate or AAP) to form pyridoxine 5'-phosphate (PNP) and inorganic phosphate. This is Pyridoxine 5'-phosphate synthase from Thiobacillus denitrificans (strain ATCC 25259 / T1).